The sequence spans 1452 residues: Pleiotropic drug resistance protein 1 (1452 aa).

Residues 152 to 425 (LNYLHILPNR…FEYMGFICPE (274 aa)) form the ABC transporter 1 domain. An ATP-binding site is contributed by 185-192 (GPPSSGKT). The region spanning 504-716 (LLKACTAREY…AQNAIAVNEF (213 aa)) is the ABC transmembrane type-2 1 domain. Helical transmembrane passes span 521–541 (FVYI…MTLF), 554–574 (GAVF…NGFS), 609–629 (IPIT…VIGF), 640–660 (LLLL…MGAL), 664–684 (IIVA…MGGF), 694–714 (WWIW…IAVN), and 753–773 (IGAG…AVAL). The tract at residues 808 to 830 (LGKSSSEKGNDVRRSASSRSMSS) is disordered. The segment covering 812–821 (SSEKGNDVRR) has biased composition (basic and acidic residues). The ABC transporter 2 domain maps to 855–1107 (ITFDDIRYAV…HLIKYFEGID (253 aa)). 900 to 907 (GVSGAGKT) lines the ATP pocket. An ABC transmembrane type-2 2 domain is found at 1180–1394 (TQCMACFWKQ…TLYGLIASQF (215 aa)). Helical transmembrane passes span 1199–1219 (YTAV…TIFW), 1239–1259 (YIAV…VIAI), 1287–1307 (LPYL…MIGF), 1314–1334 (FFWY…YGMM), 1344–1364 (IAAI…GFIV), 1375–1395 (WYYY…SQFG), and 1421–1441 (FVGY…FIFA).

The protein belongs to the ABC transporter superfamily. ABCG family. PDR (TC 3.A.1.205) subfamily. Expressed in root hypodermal passage cells. Expressed in stem tissues, particularly the vasculature and nodes adjacent to leaf axils.

The protein localises to the cell membrane. Cellular strigolactone (SL) transporter required for the exudation of SL from the root to the soil. The presence of SL in the vicinity of the roots is required for development of symbiotic interactions with arbuscular mycorrhizal fungi (AMF). Transports SL in the above ground tissues and is required for the control of shoot branching. SL regulates plant shoot architecture by inhibiting the outgrowth of axillary buds. Involved in the regulation of shootward and outward directional strigolactone transport in roots. Due to its polar localization in root cells, mediates directional shootward strigolactone transport, as well as localized outward directional transport for exudation to the soil. The sequence is that of Pleiotropic drug resistance protein 1 from Petunia hybrida (Petunia).